A 44-amino-acid polypeptide reads, in one-letter code: Photosystem II reaction center protein K (44 aa).

The propeptide occupies 1–7; it reads MESLLLA. The chain crosses the membrane as a helical span at residues 23–43; it reads FPVIPVFFLLLAFVWQAAVGF.

Belongs to the PsbK family. As to quaternary structure, PSII is composed of 1 copy each of membrane proteins PsbA, PsbB, PsbC, PsbD, PsbE, PsbF, PsbH, PsbI, PsbJ, PsbK, PsbL, PsbM, PsbT, PsbX, PsbY, PsbZ, Psb30/Ycf12, at least 3 peripheral proteins of the oxygen-evolving complex and a large number of cofactors. It forms dimeric complexes.

The protein localises to the plastid. Its subcellular location is the chloroplast thylakoid membrane. One of the components of the core complex of photosystem II (PSII). PSII is a light-driven water:plastoquinone oxidoreductase that uses light energy to abstract electrons from H(2)O, generating O(2) and a proton gradient subsequently used for ATP formation. It consists of a core antenna complex that captures photons, and an electron transfer chain that converts photonic excitation into a charge separation. In Thalassiosira pseudonana (Marine diatom), this protein is Photosystem II reaction center protein K.